A 158-amino-acid chain; its full sequence is Transcriptional repressor NrdR (158 aa).

A zinc finger lies at 3–34; that stretch reads CPFCGNADTQVVDSRVSEEGDTIRRRRRCLSC. Residues 49-139 enclose the ATP-cone domain; the sequence is PSVVKRNGSR…VYKNFEDIGE (91 aa).

This sequence belongs to the NrdR family. Requires Zn(2+) as cofactor.

In terms of biological role, negatively regulates transcription of bacterial ribonucleotide reductase nrd genes and operons by binding to NrdR-boxes. The sequence is that of Transcriptional repressor NrdR from Bordetella petrii (strain ATCC BAA-461 / DSM 12804 / CCUG 43448).